Consider the following 96-residue polypeptide: Probable RNA-binding protein YqeI (96 aa).

The CRM domain occupies M1–P96.

The sequence is that of Probable RNA-binding protein YqeI (yqeI) from Bacillus subtilis (strain 168).